The primary structure comprises 143 residues: Large ribosomal subunit protein uL15 (143 aa).

The segment at 1 to 47 (MKLHELTPSEGSRFSRRRIGRGDSSGQGKTSGRGQKGQKARGKVRVG) is disordered. Positions 23–35 (DSSGQGKTSGRGQ) are enriched in gly residues.

The protein belongs to the universal ribosomal protein uL15 family. As to quaternary structure, part of the 50S ribosomal subunit.

Its function is as follows. Binds to the 23S rRNA. The sequence is that of Large ribosomal subunit protein uL15 from Lactiplantibacillus plantarum (strain ATCC BAA-793 / NCIMB 8826 / WCFS1) (Lactobacillus plantarum).